Reading from the N-terminus, the 248-residue chain is Protein maestro (248 aa).

Residues 1 to 23 (MEQTRKIPNQPLPTPTSQSKKRR) form a disordered region. The HEAT repeat unit spans residues 128 to 163 (SFFIDITLQARTLLDDEDDSVRYSAFVLFGQLASFA).

Prominent expression seen in testis, brain, liver and heart. Weakly expressed in the kidney.

It is found in the nucleus. The protein localises to the nucleolus. The chain is Protein maestro (Mro) from Mus musculus (Mouse).